A 70-amino-acid polypeptide reads, in one-letter code: Myotoxin (70 aa).

The signal sequence occupies residues 1–22 (MKILYLLFAFLFLAFLSEPGNA). 3 disulfides stabilise this stretch: cysteine 26-cysteine 58, cysteine 33-cysteine 52, and cysteine 40-cysteine 59.

This sequence belongs to the crotamine-myotoxin family. As to quaternary structure, monomer. As to expression, expressed by the venom gland.

Its subcellular location is the secreted. In terms of biological role, cationic peptide that possesses multiple functions. It acts as a cell-penetrating peptide (CPP), and as a potent voltage-gated potassium channel (Kv) inhibitor. It exhibits antimicrobial activities, hind limb paralysis, and severe muscle necrosis by a non-enzymatic mechanism. This chain is Myotoxin, found in Crotalus helleri (Southern pacific rattlesnake).